The primary structure comprises 189 residues: Phosphoheptose isomerase (189 aa).

Residues 34 to 189 form the SIS domain; that stretch reads LVDALGNGKK…CDLLEKRLFG (156 aa). 49-51 serves as a coordination point for substrate; sequence NGG. Residues His58 and Glu62 each contribute to the Zn(2+) site. Substrate is bound by residues Glu62, 91-92, 117-119, Ser122, and Gln169; these read ND and STS. Residues Gln169 and His177 each contribute to the Zn(2+) site.

The protein belongs to the SIS family. GmhA subfamily. As to quaternary structure, homotetramer. Zn(2+) serves as cofactor.

It is found in the cytoplasm. The enzyme catalyses 2 D-sedoheptulose 7-phosphate = D-glycero-alpha-D-manno-heptose 7-phosphate + D-glycero-beta-D-manno-heptose 7-phosphate. The protein operates within carbohydrate biosynthesis; D-glycero-D-manno-heptose 7-phosphate biosynthesis; D-glycero-alpha-D-manno-heptose 7-phosphate and D-glycero-beta-D-manno-heptose 7-phosphate from sedoheptulose 7-phosphate: step 1/1. Functionally, catalyzes the isomerization of sedoheptulose 7-phosphate in D-glycero-D-manno-heptose 7-phosphate. The protein is Phosphoheptose isomerase of Geotalea uraniireducens (strain Rf4) (Geobacter uraniireducens).